A 452-amino-acid chain; its full sequence is Exodeoxyribonuclease 7 large subunit (452 aa).

Belongs to the XseA family. As to quaternary structure, heterooligomer composed of large and small subunits.

The protein localises to the cytoplasm. The catalysed reaction is Exonucleolytic cleavage in either 5'- to 3'- or 3'- to 5'-direction to yield nucleoside 5'-phosphates.. In terms of biological role, bidirectionally degrades single-stranded DNA into large acid-insoluble oligonucleotides, which are then degraded further into small acid-soluble oligonucleotides. In Bacillus mycoides (strain KBAB4) (Bacillus weihenstephanensis), this protein is Exodeoxyribonuclease 7 large subunit.